The following is a 474-amino-acid chain: Tocopherol cyclase, chloroplastic (474 aa).

The transit peptide at 1–65 (MNLAVAAALP…TPTPQDRSLR (65 aa)) directs the protein to the chloroplast.

As to expression, present in all green tissues, both in bundle sheath and in mesophyll cells.

The protein resides in the plastid. It localises to the chloroplast. It catalyses the reaction gamma-tocopherol = 2,3-dimethyl-6-phytylbenzene-1,4-diol. It functions in the pathway cofactor biosynthesis; tocopherol biosynthesis. Functionally, involved in the synthesis of tocopherols (vitamin E), which presumably protect photosynthetic complexes from oxidative stress. Catalyzes the conversion of 2,3-dimethyl-5-phytyl-1,4-hydroquinone (DMPQ) to gamma-tocopherol. The protein is Tocopherol cyclase, chloroplastic of Zea mays (Maize).